Consider the following 166-residue polypeptide: MKYTSYILALQLCVLLGFSGSYGQGPFFKEIENLKEYFNASNPDVAEGGPLFIEILKNWKEESDRKIIQSQIVSFYFKLFENFKDNQVIQRSVDIIKQDMFQKFLNGSSEKLEDFKKLIQISVDDMQIQRKAINELIKVMNDLSPKSNLIKRKRSQNLFRGRRASM.

The first 23 residues, 1-23, serve as a signal peptide directing secretion; that stretch reads MKYTSYILALQLCVLLGFSGSYG. Q24 bears the Pyrrolidone carboxylic acid mark. N-linked (GlcNAc...) asparagine glycans are attached at residues N39 and N106.

The protein belongs to the type II (or gamma) interferon family. In terms of assembly, homodimer. Interacts with IFNGR1 (via extracellular domain); this interaction promotes IFNGR1 dimerization. As to expression, released primarily from activated T lymphocytes.

It is found in the secreted. Its function is as follows. Type II interferon produced by immune cells such as T-cells and NK cells that plays crucial roles in antimicrobial, antiviral, and antitumor responses by activating effector immune cells and enhancing antigen presentation. Primarily signals through the JAK-STAT pathway after interaction with its receptor IFNGR1 to affect gene regulation. Upon IFNG binding, IFNGR1 intracellular domain opens out to allow association of downstream signaling components JAK2, JAK1 and STAT1, leading to STAT1 activation, nuclear translocation and transcription of IFNG-regulated genes. Many of the induced genes are transcription factors such as IRF1 that are able to further drive regulation of a next wave of transcription. Plays a role in class I antigen presentation pathway by inducing a replacement of catalytic proteasome subunits with immunoproteasome subunits. In turn, increases the quantity, quality, and repertoire of peptides for class I MHC loading. Increases the efficiency of peptide generation also by inducing the expression of activator PA28 that associates with the proteasome and alters its proteolytic cleavage preference. Up-regulates as well MHC II complexes on the cell surface by promoting expression of several key molecules such as cathepsins B/CTSB, H/CTSH, and L/CTSL. Participates in the regulation of hematopoietic stem cells during development and under homeostatic conditions by affecting their development, quiescence, and differentiation. This is Interferon gamma (IFNG) from Cervus elaphus (Red deer).